The chain runs to 989 residues: Clumping factor A (989 aa).

The N-terminal stretch at 1–39 (MNMKKKEKHAIRKKSIGVASVLVGTLIGFGLLSSKEADA) is a signal peptide. Positions 9–20 (HAIRKKSIGVAS) match the YSIRK-G/S signaling motif motif. 2 disordered regions span residues 34 to 205 (SKEA…VSQA) and 529 to 960 (FNNG…SEDE). The ligand binding A region stretch occupies residues 40–542 (SENSVTQSDS…SGSGDGIDKP (503 aa)). A compositionally biased stretch (low complexity) spans 47-65 (SDSASNESKSNDSSSVSAA). The segment covering 71–105 (TNVSDTKTSSNTNNGETSVAQNPAQQETTQSSSTN) has biased composition (polar residues). Composition is skewed to low complexity over residues 106–132 (ATTE…ATTQ) and 143–162 (NQTS…SVNS). Residues 163–205 (PQNSTNAENVSTTQDTSTEATPSNNESAPQNTDASNKDVVSQA) show a composition bias toward polar residues. Acidic residues predominate over residues 547–565 (QPDEPGEIEPIPEDSDSDP). Residues 566-598 (GSDSGSDSNSDSGSDSGSDSTSDSGSDSASDSD) show a composition bias toward low complexity. The segment covering 599-917 (SASDSDSASD…DNDSDSDSNS (319 aa)) has biased composition (acidic residues). Residues 918-936 (DSESGSNNNVVPPNSPKNG) are compositionally biased toward low complexity. The span at 943–952 (NEAKDSKEPL) shows a compositional bias: basic and acidic residues. An LPXTG sorting signal motif is present at residues 952-956 (LPDTG). T955 is modified (pentaglycyl murein peptidoglycan amidated threonine). The propeptide at 956–989 (GSEDEANTSLIWGLLASLGSLLLFRRKKENKDKK) is removed by sortase.

The protein belongs to the serine-aspartate repeat-containing protein (SDr) family.

The protein localises to the secreted. It is found in the cell wall. Cell surface-associated protein implicated in virulence. Promotes bacterial attachment exclusively to the gamma-chain of human fibrinogen. Induces formation of bacterial clumps, which diminish the ability of group IIA phospholipase A2 to cause bacterial phospholipid hydrolysis and killing. Significantly decreases macrophage phagocytosis possibly thanks to the clumps, clumped bacteria being too large to be phagocytosed. Dominant factor responsible for human platelet aggregation, which may be an important mechanism for initiating infective endocarditis. This Staphylococcus aureus (strain N315) protein is Clumping factor A (clfA).